Here is a 456-residue protein sequence, read N- to C-terminus: UDP-N-acetylmuramate--L-alanine ligase (456 aa).

112–118 (GAHGKTT) provides a ligand contact to ATP.

The protein belongs to the MurCDEF family.

Its subcellular location is the cytoplasm. It catalyses the reaction UDP-N-acetyl-alpha-D-muramate + L-alanine + ATP = UDP-N-acetyl-alpha-D-muramoyl-L-alanine + ADP + phosphate + H(+). The protein operates within cell wall biogenesis; peptidoglycan biosynthesis. Cell wall formation. The polypeptide is UDP-N-acetylmuramate--L-alanine ligase (Desulfatibacillum aliphaticivorans).